The following is a 563-amino-acid chain: Arginine--tRNA ligase (563 aa).

The 'HIGH' region motif lies at 121 to 131; that stretch reads PNIAKPFSIGH.

It belongs to the class-I aminoacyl-tRNA synthetase family. Monomer.

Its subcellular location is the cytoplasm. It carries out the reaction tRNA(Arg) + L-arginine + ATP = L-arginyl-tRNA(Arg) + AMP + diphosphate. This chain is Arginine--tRNA ligase, found in Streptococcus pyogenes serotype M1.